The sequence spans 352 residues: Quinolinate synthase (352 aa).

Iminosuccinate is bound by residues histidine 48 and serine 69. Cysteine 114 provides a ligand contact to [4Fe-4S] cluster. Iminosuccinate contacts are provided by residues 140–142 (YAN) and serine 157. [4Fe-4S] cluster is bound at residue cysteine 201. Iminosuccinate is bound by residues 227 to 229 (HPE) and threonine 244. Cysteine 298 provides a ligand contact to [4Fe-4S] cluster.

The protein belongs to the quinolinate synthase family. Type 1 subfamily. Requires [4Fe-4S] cluster as cofactor.

The protein resides in the cytoplasm. The catalysed reaction is iminosuccinate + dihydroxyacetone phosphate = quinolinate + phosphate + 2 H2O + H(+). The protein operates within cofactor biosynthesis; NAD(+) biosynthesis; quinolinate from iminoaspartate: step 1/1. In terms of biological role, catalyzes the condensation of iminoaspartate with dihydroxyacetone phosphate to form quinolinate. In Pseudomonas syringae pv. tomato (strain ATCC BAA-871 / DC3000), this protein is Quinolinate synthase.